The chain runs to 161 residues: Type II secretion system protein M (161 aa).

The Cytoplasmic portion of the chain corresponds to 1-16 (MNELRRRWQVMSQRER). Residues 17-37 (LMALACGGLVVLCLLYYLIWA) traverse the membrane as a helical segment. At 38–161 (PWQESVRQWQ…VTRLSLERVL (124 aa)) the chain is on the periplasmic side.

Belongs to the GSP M family. In terms of assembly, type II secretion system is composed of four main components: the outer membrane complex, the inner membrane complex, the cytoplasmic secretion ATPase and the periplasm-spanning pseudopilus. Forms homodimers. Interacts with OutL/GspL. Interacts with OutE/GspE and OutF/GspF.

Its subcellular location is the cell inner membrane. Inner membrane component of the type II secretion system required for the energy-dependent secretion of extracellular factors such as proteases and toxins from the periplasm. Plays a role in the complex assembly and recruits OutL resulting in a stable complex in the inner membrane. Provides thus a link between the energy-providing OutE protein in the cytoplasm and the rest of the T2SS machinery. This chain is Type II secretion system protein M (outM), found in Dickeya chrysanthemi (Pectobacterium chrysanthemi).